A 137-amino-acid polypeptide reads, in one-letter code: Phosphomevalonate dehydratase small subunit (137 aa).

Ser-62 serves as the catalytic Proton acceptor.

It belongs to the AcnX type II small subunit family. As to quaternary structure, heterodimer composed of a large subunit (PMDh-L) and a small subunit (PMDh-S).

It carries out the reaction (R)-5-phosphomevalonate = (2E)-3-methyl-5-phosphooxypent-2-enoate + H2O. It functions in the pathway isoprenoid biosynthesis; isopentenyl diphosphate biosynthesis via mevalonate pathway. Its function is as follows. Component of a hydro-lyase that catalyzes the dehydration of mevalonate 5-phosphate (MVA5P) to form trans-anhydromevalonate 5-phosphate (tAHMP). Involved in the archaeal mevalonate (MVA) pathway, which provides fundamental precursors for isoprenoid biosynthesis, such as isopentenyl diphosphate (IPP) and dimethylallyl diphosphate (DMAPP). In Methanothrix thermoacetophila (strain DSM 6194 / JCM 14653 / NBRC 101360 / PT) (Methanosaeta thermophila), this protein is Phosphomevalonate dehydratase small subunit.